Here is a 160-residue protein sequence, read N- to C-terminus: Probable dihydroneopterin aldolase 3 (160 aa).

Substrate is bound by residues Glu-59, Phe-91, and 110–111; that span reads YE. Lys-137 (proton donor/acceptor) is an active-site residue.

Belongs to the DHNA family. Homooctamer. Forms a hollow cylinder assembled from two ring-shaped tetramers. As to expression, expressed at very low levels in siliques.

The catalysed reaction is 7,8-dihydroneopterin = 6-hydroxymethyl-7,8-dihydropterin + glycolaldehyde. Its pathway is cofactor biosynthesis; tetrahydrofolate biosynthesis; 2-amino-4-hydroxy-6-hydroxymethyl-7,8-dihydropteridine diphosphate from 7,8-dihydroneopterin triphosphate: step 3/4. Its function is as follows. Catalyzes the conversion of 7,8-dihydroneopterin into 6-hydroxymethyl-7,8-dihydropterin, a biosynthetic precursor of the vitamin tetrahydrofolate. Can use L-threo-dihydroneopterin and D-erythro-dihydroneopterin as substrates for the formation of 6-hydroxymethyldihydropterin, but it can also catalyze the epimerization of carbon 2' of dihydroneopterin and dihydromonapterin. This Arabidopsis thaliana (Mouse-ear cress) protein is Probable dihydroneopterin aldolase 3.